The chain runs to 635 residues: tRNA uridine 5-carboxymethylaminomethyl modification enzyme MnmG (635 aa).

15 to 20 (GAGHAG) contributes to the FAD binding site. Residue 276–290 (GPRYCPSIEDKIVRF) coordinates NAD(+).

It belongs to the MnmG family. In terms of assembly, homodimer. Heterotetramer of two MnmE and two MnmG subunits. FAD is required as a cofactor.

The protein resides in the cytoplasm. Functionally, NAD-binding protein involved in the addition of a carboxymethylaminomethyl (cmnm) group at the wobble position (U34) of certain tRNAs, forming tRNA-cmnm(5)s(2)U34. The chain is tRNA uridine 5-carboxymethylaminomethyl modification enzyme MnmG from Streptococcus sanguinis (strain SK36).